Consider the following 613-residue polypeptide: tRNA 5-methylaminomethyl-2-thiouridine biosynthesis bifunctional protein MnmC (613 aa).

The interval 1 to 225 (MKKAKLIFKD…KREMIKAYLE (225 aa)) is tRNA (mnm(5)s(2)U34)-methyltransferase. Residues 252–613 (IGAGISSAVL…FLIRKLKKGL (362 aa)) are FAD-dependent cmnm(5)s(2)U34 oxidoreductase.

In the N-terminal section; belongs to the methyltransferase superfamily. tRNA (mnm(5)s(2)U34)-methyltransferase family. It in the C-terminal section; belongs to the DAO family. FAD serves as cofactor.

The protein resides in the cytoplasm. The catalysed reaction is 5-aminomethyl-2-thiouridine(34) in tRNA + S-adenosyl-L-methionine = 5-methylaminomethyl-2-thiouridine(34) in tRNA + S-adenosyl-L-homocysteine + H(+). Catalyzes the last two steps in the biosynthesis of 5-methylaminomethyl-2-thiouridine (mnm(5)s(2)U) at the wobble position (U34) in tRNA. Catalyzes the FAD-dependent demodification of cmnm(5)s(2)U34 to nm(5)s(2)U34, followed by the transfer of a methyl group from S-adenosyl-L-methionine to nm(5)s(2)U34, to form mnm(5)s(2)U34. The polypeptide is tRNA 5-methylaminomethyl-2-thiouridine biosynthesis bifunctional protein MnmC (Campylobacter jejuni subsp. jejuni serotype O:2 (strain ATCC 700819 / NCTC 11168)).